Reading from the N-terminus, the 103-residue chain is Zinc-containing ferredoxin (103 aa).

The segment at 1 to 36 (GIDPNYRTSKPVVGDHSGHKIYGPVESPKVLGVHGT) is N-terminal extension. H19 provides a ligand contact to Zn(2+). K29 bears the N6-methyllysine mark. H34 lines the Zn(2+) pocket. 2 4Fe-4S ferredoxin-type domains span residues 35 to 65 (GTIV…WYET) and 74 to 103 (KADP…VKPP). 2 residues coordinate [3Fe-4S] cluster: C45 and C51. C55 serves as a coordination point for [4Fe-4S] cluster. D76 contacts Zn(2+). The [4Fe-4S] cluster site is built by C83, C86, and C89. Position 93 (C93) interacts with [3Fe-4S] cluster.

[3Fe-4S] cluster is required as a cofactor. It depends on [4Fe-4S] cluster as a cofactor. Zn(2+) serves as cofactor.

In terms of biological role, ferredoxins are iron-sulfur proteins that transfer electrons in a wide variety of metabolic reactions. This is Zinc-containing ferredoxin (zfx) from Sulfolobus acidocaldarius (strain ATCC 33909 / DSM 639 / JCM 8929 / NBRC 15157 / NCIMB 11770).